The following is a 370-amino-acid chain: tRNA-specific 2-thiouridylase MnmA (370 aa).

ATP is bound by residues 9–16 (GMSGGVDS) and methionine 35. The interaction with target base in tRNA stretch occupies residues 95-97 (NPD). The active-site Nucleophile is cysteine 100. Cysteine 100 and cysteine 196 are joined by a disulfide. Glycine 124 contributes to the ATP binding site. The segment at 146-148 (KDQ) is interaction with tRNA. Cysteine 196 (cysteine persulfide intermediate) is an active-site residue. An interaction with tRNA region spans residues 308–309 (RY).

Belongs to the MnmA/TRMU family.

It localises to the cytoplasm. The enzyme catalyses S-sulfanyl-L-cysteinyl-[protein] + uridine(34) in tRNA + AH2 + ATP = 2-thiouridine(34) in tRNA + L-cysteinyl-[protein] + A + AMP + diphosphate + H(+). Functionally, catalyzes the 2-thiolation of uridine at the wobble position (U34) of tRNA, leading to the formation of s(2)U34. This Ralstonia pickettii (strain 12J) protein is tRNA-specific 2-thiouridylase MnmA.